We begin with the raw amino-acid sequence, 133 residues long: Small ribosomal subunit protein uS11 (133 aa).

It belongs to the universal ribosomal protein uS11 family. As to quaternary structure, part of the 30S ribosomal subunit. Interacts with proteins S7 and S18. Binds to IF-3.

In terms of biological role, located on the platform of the 30S subunit, it bridges several disparate RNA helices of the 16S rRNA. Forms part of the Shine-Dalgarno cleft in the 70S ribosome. The protein is Small ribosomal subunit protein uS11 of Brevibacillus brevis (strain 47 / JCM 6285 / NBRC 100599).